We begin with the raw amino-acid sequence, 158 residues long: 3-hydroxyacyl-[acyl-carrier-protein] dehydratase FabZ (158 aa).

The active site involves His62.

Belongs to the thioester dehydratase family. FabZ subfamily.

The protein localises to the cytoplasm. The enzyme catalyses a (3R)-hydroxyacyl-[ACP] = a (2E)-enoyl-[ACP] + H2O. Involved in unsaturated fatty acids biosynthesis. Catalyzes the dehydration of short chain beta-hydroxyacyl-ACPs and long chain saturated and unsaturated beta-hydroxyacyl-ACPs. This is 3-hydroxyacyl-[acyl-carrier-protein] dehydratase FabZ from Novosphingobium aromaticivorans (strain ATCC 700278 / DSM 12444 / CCUG 56034 / CIP 105152 / NBRC 16084 / F199).